The chain runs to 349 residues: Beta-hexosaminidase (349 aa).

Substrate-binding positions include D64, R72, R138, and 168 to 169; that span reads KH. Residue H181 is the Proton donor/acceptor of the active site. D252 (nucleophile) is an active-site residue.

Belongs to the glycosyl hydrolase 3 family. NagZ subfamily.

Its subcellular location is the cytoplasm. It catalyses the reaction Hydrolysis of terminal non-reducing N-acetyl-D-hexosamine residues in N-acetyl-beta-D-hexosaminides.. Its pathway is cell wall biogenesis; peptidoglycan recycling. In terms of biological role, plays a role in peptidoglycan recycling by cleaving the terminal beta-1,4-linked N-acetylglucosamine (GlcNAc) from peptide-linked peptidoglycan fragments, giving rise to free GlcNAc, anhydro-N-acetylmuramic acid and anhydro-N-acetylmuramic acid-linked peptides. The chain is Beta-hexosaminidase from Methylobacillus flagellatus (strain ATCC 51484 / DSM 6875 / VKM B-1610 / KT).